Consider the following 247-residue polypeptide: Segregation and condensation protein A (247 aa).

This sequence belongs to the ScpA family. As to quaternary structure, component of a cohesin-like complex composed of ScpA, ScpB and the Smc homodimer, in which ScpA and ScpB bind to the head domain of Smc. The presence of the three proteins is required for the association of the complex with DNA.

It localises to the cytoplasm. In terms of biological role, participates in chromosomal partition during cell division. May act via the formation of a condensin-like complex containing Smc and ScpB that pull DNA away from mid-cell into both cell halves. The sequence is that of Segregation and condensation protein A from Lactobacillus gasseri (strain ATCC 33323 / DSM 20243 / BCRC 14619 / CIP 102991 / JCM 1131 / KCTC 3163 / NCIMB 11718 / NCTC 13722 / AM63).